A 287-amino-acid chain; its full sequence is PPP2R1A-PPP2R2A-interacting phosphatase regulator 1 (287 aa).

A disordered region spans residues 1-44; the sequence is MAQEKMELDLELPPGTGGSPAEGGGSGGGGGLRRSNSAPLIHGL. The span at 15-32 shows a compositional bias: gly residues; it reads GTGGSPAEGGGSGGGGGL. At S35 the chain carries Phosphoserine. Position 37 is a phosphoserine; by CHEK1 (S37). S45 is modified (phosphoserine). Phosphothreonine is present on T47. A phosphoserine mark is found at S48, S62, and S76. K89 is covalently cross-linked (Glycyl lysine isopeptide (Lys-Gly) (interchain with G-Cter in SUMO1)). Residues S143 and S147 each carry the phosphoserine modification. At T149 the chain carries Phosphothreonine. Disordered stretches follow at residues 167–189 and 236–287; these read SNGL…RSQS and GVCV…LSSK. Low complexity-rich tracts occupy residues 178-189 and 246-257; these read PTTRFTTRRSQS and GNSSSAGSSCNS. A phosphoserine mark is found at S187 and S189. Residues 259 to 270 are compositionally biased toward polar residues; it reads AKVSTTTDSPVS. 3 positions are modified to phosphoserine: S267, S270, and S276.

Belongs to the FAM122 family. Interacts with PPP2CA and PPP2R1A. Interacts (via its N-terminus) with PPP2R2A; the interaction is direct and this interaction inhibits PP2A activity. The CHEK1-mediated Ser-37 phosphorylated form interacts with 14-3-3 proteins. Post-translationally, CHEK1-mediated phosphorylation at Ser-37 negatively regulates its ability to inhibit serine/threonine-protein phosphatase 2A (PP2A) activity. Phosphorylation leads to its release from the PP2A complex and its sequestration by 14-3-3 proteins in the cytoplasm resulting in its inability to translocate to the nucleus, where it otherwise inhibits PP2A.

The protein resides in the nucleus. Its subcellular location is the cytoplasm. Its function is as follows. Acts as an inhibitor of serine/threonine-protein phosphatase 2A (PP2A) activity. Inhibits PP2A activity by blocking the substrate binding site on PPP2R2A and the active site of PPP2CA. Potentiates ubiquitin-mediated proteasomal degradation of serine/threonine-protein phosphatase 2A catalytic subunit alpha (PPP2CA). Inhibits PP2A-mediated dephosphorylation of WEE1, promoting ubiquitin-mediated proteolysis of WEE1, thereby releasing G2/M checkpoint. This is PPP2R1A-PPP2R2A-interacting phosphatase regulator 1 from Homo sapiens (Human).